A 426-amino-acid polypeptide reads, in one-letter code: Tektin-1 (426 aa).

3 coiled-coil regions span residues 21–84, 268–307, and 339–383; these read KNQY…LEQL, LKETKAARDQLAAHLAKVMEEIACQEKNMTVLEKAILDQE, and KEVG…ENTI. Positions 396–426 are disordered; sequence SNPLRDGGDQGQWARACAPTPSAEDGTSHTD.

It belongs to the tektin family. As to quaternary structure, microtubule inner protein component of sperm flagellar doublet microtubules. Ubiquitinated, leading to its degradation. Deubiquitinated by USP16, promoting its stability.

Its subcellular location is the cytoplasm. It is found in the cytoskeleton. The protein resides in the cilium axoneme. The protein localises to the flagellum axoneme. Functionally, microtubule inner protein (MIP) part of the dynein-decorated doublet microtubules (DMTs) in cilia and flagellar axoneme. Forms filamentous polymers in the walls of ciliary and flagellar microtubules. The polypeptide is Tektin-1 (TEKT1) (Canis lupus familiaris (Dog)).